The primary structure comprises 247 residues: MDYQTFEKVNKFINVKAYIFFLTQELKQQYKLSLKELLILAYFYYKNEHSISLKEIIGDILYKQSDVVKNIKSLSKKGFINKSRNEADERRIFVSVTPIQRKKIACVINELDKIIKGFNKERDYIKYQWAPKYSKEFFILFMNIMYSKDFLKYRFNLTFLDLSILYVISSRKNEILNLKDLFESIRFMYPQIVRSVNRLNNKGMLIKERSLADERIVLIKINKIQYNTIKSIFTDTSKILKPRKFFF.

2 DNA-binding regions (H-T-H motif) span residues 53 to 76 (LKEIIGDILYKQSDVVKNIKSLSK) and 178 to 201 (LKDLFESIRFMYPQIVRSVNRLNN).

The protein belongs to the SarA family.

Its subcellular location is the cytoplasm. In terms of biological role, positive regulator of RNAII and RNAIII in a cell density-dependent manner. It can contribute to the expression of virulence genes controlled by agr. May also regulate target genes via an agr-independent pathway. The chain is HTH-type transcriptional regulator SarU (sarU) from Staphylococcus aureus (strain COL).